Here is a 958-residue protein sequence, read N- to C-terminus: Transcription factor PfmaH (958 aa).

Positions 44-70 (CLNCSQAKTGCNKEVPCQRCQDKGLHC) form a DNA-binding region, zn(2)-C6 fungal-type. The disordered stretch occupies residues 272 to 301 (EFAGSPSGVSPFGDLSTSNSEPSSSSWGSS). Residues 287-301 (STSNSEPSSSSWGSS) show a composition bias toward low complexity.

It is found in the nucleus. Transcription factor; part of the gene cluster that mediates the biosynthesis of dihydroxynaphthalene (DHN)-melanin, a bluish-green pigment forming a dark layer in the conidial wall that protects the conidia from UV radiations. The 2 transcription factors present in the cluster, PfmaF and PfmaH, coordinately regulate DHN-melanin production. PfmaH acts as a pathway specific regulator to mediate the expression of Pfma cluster genes including PfmaJ, leading to DHN-melanin production in conidia, and regulates the conidial formation. The protein is Transcription factor PfmaH (PfmaH) of Pestalotiopsis fici (strain W106-1 / CGMCC3.15140).